The chain runs to 297 residues: Phosphoribosylaminoimidazole-succinocarboxamide synthase (297 aa).

It belongs to the SAICAR synthetase family.

It catalyses the reaction 5-amino-1-(5-phospho-D-ribosyl)imidazole-4-carboxylate + L-aspartate + ATP = (2S)-2-[5-amino-1-(5-phospho-beta-D-ribosyl)imidazole-4-carboxamido]succinate + ADP + phosphate + 2 H(+). The protein operates within purine metabolism; IMP biosynthesis via de novo pathway; 5-amino-1-(5-phospho-D-ribosyl)imidazole-4-carboxamide from 5-amino-1-(5-phospho-D-ribosyl)imidazole-4-carboxylate: step 1/2. The polypeptide is Phosphoribosylaminoimidazole-succinocarboxamide synthase (Corynebacterium diphtheriae (strain ATCC 700971 / NCTC 13129 / Biotype gravis)).